Reading from the N-terminus, the 401-residue chain is Tumor necrosis factor receptor superfamily member 11B (401 aa).

An N-terminal signal peptide occupies residues 1–21; it reads MNKWLCCALLVFLDIIEWTTQ. 4 TNFR-Cys repeats span residues 24–62, 65–105, 107–142, and 145–185; these read FPPK…KTLC, CPDY…NRVC, CEEG…NTVC, and CPDG…DNVC. Disulfide bonds link C41–C54, C44–C62, C65–C80, C83–C97, C87–C105, C107–C118, C124–C142, and C145–C160. N-linked (GlcNAc...) asparagine glycosylation is present at N98. N165 and N178 each carry an N-linked (GlcNAc...) asparagine glycan. C166 and C185 are joined by a disulfide. Death domains lie at 198 to 269 and 270 to 365; these read DVTL…MVKK and IIQD…THSL. Residue N289 is glycosylated (N-linked (GlcNAc...) asparagine).

In terms of assembly, homodimer. Interacts with TNFSF10 and TNFSF11.

It is found in the secreted. Acts as a decoy receptor for TNFSF11/RANKL and thereby neutralizes its function in osteoclastogenesis. Inhibits the activation of osteoclasts and promotes osteoclast apoptosis in vitro. Bone homeostasis seems to depend on the local ratio between TNFSF11 and TNFRSF11B. May also play a role in preventing arterial calcification. May act as decoy receptor for TNFSF10/TRAIL and protect against apoptosis. TNFSF10/TRAIL binding blocks the inhibition of osteoclastogenesis. The sequence is that of Tumor necrosis factor receptor superfamily member 11B (Tnfrsf11b) from Rattus norvegicus (Rat).